The following is a 78-amino-acid chain: Probable [Fe-S]-dependent transcriptional repressor (78 aa).

Residues Cys-56, Cys-61, Cys-64, and Cys-70 each contribute to the iron-sulfur cluster site.

Belongs to the FeoC family.

Its function is as follows. May function as a transcriptional regulator that controls feoABC expression. This is Probable [Fe-S]-dependent transcriptional repressor from Cronobacter sakazakii (strain ATCC BAA-894) (Enterobacter sakazakii).